The chain runs to 405 residues: Glucose-1-phosphate adenylyltransferase (405 aa).

Alpha-D-glucose 1-phosphate is bound by residues Gly164, 179–180 (EK), and Ser197.

The protein belongs to the bacterial/plant glucose-1-phosphate adenylyltransferase family. Homotetramer.

The enzyme catalyses alpha-D-glucose 1-phosphate + ATP + H(+) = ADP-alpha-D-glucose + diphosphate. Its pathway is glycan biosynthesis; glycogen biosynthesis. Involved in the biosynthesis of ADP-glucose, a building block required for the elongation reactions to produce glycogen. Catalyzes the reaction between ATP and alpha-D-glucose 1-phosphate (G1P) to produce pyrophosphate and ADP-Glc. This chain is Glucose-1-phosphate adenylyltransferase, found in Corynebacterium jeikeium (strain K411).